Consider the following 967-residue polypeptide: MAELNFKAIEEKWQKRWMEDRVFEPDRNAKPKEKKFYITVAFPYLSGHLHVGHARTYTIPDVIARFKRMQGYNVLFPMAWHITGAPIVGIAERIKNRDPKTIHIYRDVYKVPEEILWKFEDPKEIVKYFMKAARETFIRAGFSVDWSREFHTTSLFPPFSKFIEWQFWTLKDMGLVVKGAHRVRWDPVVGTPLGDHDIMEGEDVQILEYVIIKFILEENGEEIYMPAATLRPETVYGVTNMWLNPEAIYVKAKVRRGDREETWIISKEAAYKLSFQDREIEVIEEFKGERLIGKYVKNPVTGDEVIILPAEFVDPDNATGVVMSVPAHAPFDHVALEDLKKETEILLKYDIDPRVVEEISYISLIKLEGYGEFPAVEEVEKLGVKSQKDEEKLEEATKNIYKAEYHKGVFKIEPYAGKPVQEVKDLIAKELQEKGIAEIMYEFAEKPVISRFGNQAVIKIIHDQWFIDYGNPEWKEKAREALANMTIYPESRRTQFEAVIDWLDKKACARKVGLGTPLPWDPEWVIESLSDSTIYMAYYTISRHINKLREEGRLDPEKLDREFFDYLFREEFSEEREKELAEKTGIPAEIIHEMKEEFEYWYPLDWRCSAKDLIPNHLTFFIFNHVAIFRKGHWPRGIAVNGFGTLEGQKMSKSKGNVLNFIDAIEENGADVVRLYIMGLAEHDSDFDWRRKEVGKLRKQVERFYELVSEFASYEAKEGVELKDIDRWMLHRLNKAIEGATKGLEEFRTRTAVQWAFYSVLNDLRWYLRRTEGRDDEAKRYVLRTLADVWVRLMAPFTPHISEELWEKLGGEGFVSLAKWPEPNPAWWNETIELEEEYVKNLIEDIKEIIRVAKIEDAKRAYIYTAPEWKWRVAEAVAEKRDFKAAMSELMKDPEMRKHGKEISKMIQRLIKDRAFEIKRIDEEKALREAKDFIEKELGLEIIINPEEDKGGKKKAAMPMKPAVFVE.

Residues P43 to H53 carry the 'HIGH' region motif. The 'KMSKS' region signature appears at K650–S654. K653 contributes to the ATP binding site.

This sequence belongs to the class-I aminoacyl-tRNA synthetase family.

The protein resides in the cytoplasm. It carries out the reaction tRNA(Leu) + L-leucine + ATP = L-leucyl-tRNA(Leu) + AMP + diphosphate. This is Leucine--tRNA ligase from Thermococcus onnurineus (strain NA1).